The following is a 1220-amino-acid chain: Formin-F (1220 aa).

Over residues 1–10 (MNRIFGRKKK) the composition is skewed to basic residues. Residues 1 to 62 (MNRIFGRKKK…TNSKSADKFD (62 aa)) are disordered. The region spanning 6 to 373 (GRKKKDKDSD…QISVNKPMIG (368 aa)) is the GBD/FH3 domain. Positions 11-20 (DKDSDEKGST) are enriched in basic and acidic residues. The segment covering 41 to 56 (AYSSLQPDGNNSTNSK) has biased composition (polar residues). Residues 392-428 (VALQSEFQKNIEELAKVKDQLKKANFDLNIANQELSS) are a coiled coil. Disordered stretches follow at residues 461–659 (IDSN…KFTV), 711–732 (SQKK…GTVS), and 1049–1192 (DEAK…KKDI). Low complexity-rich tracts occupy residues 501-518 (SKPP…SSSQ) and 525-554 (SNLS…PQQQ). The FH1 domain occupies 532–655 (SDSLSNDFKS…NSNKPPANAP (124 aa)). Polar residues predominate over residues 555–564 (NIESTLTPEP). The segment covering 575 to 638 (TTPPPAPPAP…GKGGPPPPPG (64 aa)) has biased composition (pro residues). One can recognise an FH2 domain in the interval 656–1054 (KFTVSKPTTK…AIKRDEAKAK (399 aa)). A compositionally biased stretch (basic and acidic residues) spans 711–722 (SQKKLEASDKKS). Residues 1032-1062 (YKDFQRDKEAAERAIKRDEAKAKKAQQLKRM) adopt a coiled-coil conformation. Over residues 1066–1083 (IASSTNNKNPLASSSTSV) the composition is skewed to polar residues. Residues 1083-1158 (VGDGGMVEDI…TPSKSGSRRE (76 aa)) enclose the DAD domain. Positions 1117–1142 (DSSSITTISEQSENSNTSSITITTPS) are enriched in low complexity. The segment covering 1161 to 1192 (TSKSSDKDKEKEKEKEKQCESTESEDINKKDI) has biased composition (basic and acidic residues).

It belongs to the formin homology family. Diaphanous subfamily. As to quaternary structure, interacts (via GBD/FH3 domain) with activated Rho-GTPases.

Its function is as follows. Formins play an important role in the nucleation of actin and the formation of linear actin filaments. The sequence is that of Formin-F (forF) from Dictyostelium discoideum (Social amoeba).